We begin with the raw amino-acid sequence, 782 residues long: General transcription and DNA repair factor IIH helicase/translocase subunit XPB (782 aa).

Positions 1–11 (MGKRDRADRDK) are enriched in basic and acidic residues. Disordered stretches follow at residues 1-51 (MGKR…ESGT) and 218-241 (SAISKTAESSGGPSTSRVTDPQGK). The Nuclear localization signal motif lies at 6 to 18 (RADRDKKKSRKRH). A compositionally biased stretch (acidic residues) spans 21 to 30 (DEEDDEEDAP). A compositionally biased stretch (polar residues) spans 218–236 (SAISKTAESSGGPSTSRVT). The Helicase ATP-binding domain maps to 327-488 (MFGNGRARSG…DLNFLIGPKL (162 aa)). 340 to 347 (LPCGAGKS) contributes to the ATP binding site. A DEVH box motif is present at residues 441–444 (DEVH). The Helicase C-terminal domain occupies 542 to 702 (RACQFLIKFH…LAGMEEEDLA (161 aa)). Position 686 is a phosphoserine (Ser686). Residue Ser751 is modified to Phosphoserine; by CK2.

Belongs to the helicase family. RAD25/XPB subfamily. Component of the 7-subunit TFIIH core complex composed of XPB/ERCC3, XPD/ERCC2, GTF2H1, GTF2H2, GTF2H3, GTF2H4 and GTF2H5, which is active in NER. The core complex associates with the 3-subunit CDK-activating kinase (CAK) module composed of CCNH/cyclin H, CDK7 and MNAT1 to form the 10-subunit holoenzyme (holo-TFIIH) active in transcription. Interacts with PUF60. Interacts with ATF7IP. Interacts with KAT2A; leading to KAT2A recruitment to promoters and acetylation of histones. Part of TBP-based Pol II pre-initiation complex (PIC), in which Pol II core assembles with general transcription factors and other specific initiation factors including GTF2E1, GTF2E2, GTF2F1, GTF2F2, TCEA1, ERCC2, ERCC3, GTF2H2, GTF2H3, GTF2H4, GTF2H5, GTF2A1, GTF2A2, GTF2B and TBP; this large multi-subunit PIC complex mediates DNA unwinding and targets Pol II core to the transcription start site where the first phosphodiester bond forms. Post-translationally, phosphorylation on Ser-751 by CK2 controls the 5'-excision activity of ERCC1-XPF endonuclease; phosphorylated protein inhibits the excision activity and thus NER. Dephosphorylation reactivates the 5'-excision step. Phosphorylation has no effect on transcription or the 3'-5' helicase activity.

The protein resides in the nucleus. It carries out the reaction Couples ATP hydrolysis with the unwinding of duplex DNA by translocating in the 3'-5' direction.. It catalyses the reaction ATP + H2O = ADP + phosphate + H(+). With respect to regulation, phosphorylation on Ser-751 by CK2 controls the 5'-excision activity of ERCC1-XPF endonuclease; phosphorylated protein inhibits the excision activity and thus NER. ATPase activity is stimulated by TFIIH subunit p52 (GTF2H4). DNA translocase activity by this subunit in TFIIH is stimulated by XPA, ERCC5/XPG and XFP plus ERCC1. Its function is as follows. ATP-dependent 3'-5' DNA helicase/translocase; binds dsDNA rather than ssDNA, unzipping it in a translocase rather than classical helicase activity. Component of the general transcription and DNA repair factor IIH (TFIIH) core complex. When complexed to CDK-activating kinase (CAK), involved in RNA transcription by RNA polymerase II. The ATPase activity of XPB/ERCC3, but not its helicase activity, is required for DNA opening; it may wrap around the damaged DNA wedging it open, causing localized melting and twisting that allows XPD/ERCC2 helicase to anchor. The ATP-dependent helicase activity of XPB/ERCC3 may be required for promoter escape. Also involved in transcription-coupled nucleotide excision repair (NER) of damaged DNA. In NER, TFIIH acts by opening DNA around the lesion to allow the excision of the damaged oligonucleotide and its replacement by a new DNA fragment. The structure of the TFIIH transcription complex differs from the NER-TFIIH complex; large movements by XPD/ERCC2 and XPB/ERCC3 are stabilized by XPA. The polypeptide is General transcription and DNA repair factor IIH helicase/translocase subunit XPB (ERCC3) (Pongo abelii (Sumatran orangutan)).